The primary structure comprises 76 residues: uncharacterized protein (76 aa).

This is an uncharacterized protein from African swine fever virus (isolate Tick/Malawi/Lil 20-1/1983) (ASFV).